The following is a 660-amino-acid chain: Cysteine-rich receptor-like protein kinase 22 (660 aa).

The signal sequence occupies residues 1-24; the sequence is MKQRSFLSILCFILLAFGVASVSA. Gnk2-homologous domains follow at residues 25–128 and 137–250; these read QTCI…NISF and IEPQ…LFTF. The Extracellular segment spans residues 25 to 294; sequence QTCIENRKYF…DSRGVSAGIV (270 aa). N-linked (GlcNAc...) asparagine glycans are attached at residues N37, N53, N105, N125, N191, N230, and N256. Residues 264–273 are compositionally biased toward pro residues; that stretch reads KPPMNVPRPP. Residues 264 to 283 are disordered; it reads KPPMNVPRPPSVGHGANTTD. N-linked (GlcNAc...) asparagine glycans are attached at residues N280 and N284. A helical transmembrane segment spans residues 295-315; that stretch reads VVITVPAVVIVLILVVLGFFI. Topologically, residues 316–660 are cytoplasmic; that stretch reads CWRRKSLQRT…DPLSEGLESG (345 aa). Residues 353–632 form the Protein kinase domain; the sequence is FSKSNKLGEG…IVSMLTSNTI (280 aa). Residues 359–367 and K381 contribute to the ATP site; that span reads LGEGRFGEV. Y426 is modified (phosphotyrosine). Catalysis depends on D478, which acts as the Proton acceptor. The residue at position 482 (S482) is a Phosphoserine. The residue at position 518 (T518) is a Phosphothreonine. Y526 carries the phosphotyrosine modification.

It belongs to the protein kinase superfamily. Ser/Thr protein kinase family. CRK subfamily.

The protein localises to the membrane. The catalysed reaction is L-seryl-[protein] + ATP = O-phospho-L-seryl-[protein] + ADP + H(+). The enzyme catalyses L-threonyl-[protein] + ATP = O-phospho-L-threonyl-[protein] + ADP + H(+). The protein is Cysteine-rich receptor-like protein kinase 22 (CRK22) of Arabidopsis thaliana (Mouse-ear cress).